The chain runs to 347 residues: MKANVILCLLAPLVAALPTETIHLDPELAALRANLTERTADLWDRQASQSIDQLIKRKGKLYFGTATDRGLLQREKNAAIIQADLGQVTPENSMKWQSLENNQGQLNWGDADYLVNFAQQNGKSIRGHTLIWHSQLPAWVNNINNADTLRQVIRTHVSTVVGRYKGKIRAWDVVNEIFNEDGTLRSSVFSRLLGEEFVSIAFRAARDADPSARLYINDYNLDRANYGKVNGLKTYVSKWISQGVPIDGIGSQSHLSGGGGSGTLGALQQLATVPVTELAITELDIQGAPTTDYTQVVQACLSVSKCVGITVWGISDKDSWRASTNPLLFDANFNPKPAYNSIVGILQ.

Positions 1 to 16 (MKANVILCLLAPLVAA) are cleaved as a signal peptide. Positions 17-45 (LPTETIHLDPELAALRANLTERTADLWDR) are excised as a propeptide. Pyrrolidone carboxylic acid is present on glutamine 46. Residues 46-345 (QASQSIDQLI…KPAYNSIVGI (300 aa)) form the GH10 domain. The Proton donor role is filled by glutamate 176. The active-site Nucleophile is glutamate 282. A disulfide bridge links cysteine 300 with cysteine 306.

The protein belongs to the glycosyl hydrolase 10 (cellulase F) family. Monomer. Not glycosylated.

The protein resides in the secreted. The catalysed reaction is Endohydrolysis of (1-&gt;4)-beta-D-xylosidic linkages in xylans.. It functions in the pathway glycan degradation; xylan degradation. In terms of biological role, glycoside hydrolase involved in the hydrolysis of xylan, a major plant cell wall hemicellulose made up of 1,4-beta-linked D-xylopyranose residues. Catalyzes the endohydrolysis of the main-chain 1,4-beta-glycosidic bonds connecting the xylose subunits yielding various xylooligosaccharides and xylose. Produces xylobiose and xylotriose as the main degradation products. The sequence is that of Endo-1,4-beta-xylanase 3 (xyn3) from Hypocrea jecorina (strain QM6a) (Trichoderma reesei).